Reading from the N-terminus, the 174-residue chain is ATP-dependent protease subunit HslV (174 aa).

Residue T2 is part of the active site. Na(+)-binding residues include G157, D160, and T163.

The protein belongs to the peptidase T1B family. HslV subfamily. In terms of assembly, a double ring-shaped homohexamer of HslV is capped on each side by a ring-shaped HslU homohexamer. The assembly of the HslU/HslV complex is dependent on binding of ATP.

The protein resides in the cytoplasm. The enzyme catalyses ATP-dependent cleavage of peptide bonds with broad specificity.. With respect to regulation, allosterically activated by HslU binding. Its function is as follows. Protease subunit of a proteasome-like degradation complex believed to be a general protein degrading machinery. The chain is ATP-dependent protease subunit HslV from Aliivibrio fischeri (strain MJ11) (Vibrio fischeri).